A 401-amino-acid chain; its full sequence is Phosphoglycerate kinase (401 aa).

Substrate is bound by residues 21–23, arginine 36, 59–62, arginine 119, and arginine 160; these read DFN and HLGR. ATP contacts are provided by residues lysine 212, glutamate 330, and 357 to 360; that span reads GGDS.

This sequence belongs to the phosphoglycerate kinase family. Monomer.

It localises to the cytoplasm. The enzyme catalyses (2R)-3-phosphoglycerate + ATP = (2R)-3-phospho-glyceroyl phosphate + ADP. Its pathway is carbohydrate degradation; glycolysis; pyruvate from D-glyceraldehyde 3-phosphate: step 2/5. This chain is Phosphoglycerate kinase, found in Limosilactobacillus fermentum (strain NBRC 3956 / LMG 18251) (Lactobacillus fermentum).